A 159-amino-acid chain; its full sequence is NADH-quinone oxidoreductase subunit I (159 aa).

4Fe-4S ferredoxin-type domains lie at 51 to 80 (RRYE…IEAD) and 90 to 119 (TRYD…EGPN). 8 residues coordinate [4Fe-4S] cluster: Cys60, Cys63, Cys66, Cys70, Cys99, Cys102, Cys105, and Cys109.

It belongs to the complex I 23 kDa subunit family. As to quaternary structure, NDH-1 is composed of 14 different subunits. Subunits NuoA, H, J, K, L, M, N constitute the membrane sector of the complex. The cofactor is [4Fe-4S] cluster.

The protein localises to the cell inner membrane. It carries out the reaction a quinone + NADH + 5 H(+)(in) = a quinol + NAD(+) + 4 H(+)(out). Its function is as follows. NDH-1 shuttles electrons from NADH, via FMN and iron-sulfur (Fe-S) centers, to quinones in the respiratory chain. The immediate electron acceptor for the enzyme in this species is believed to be ubiquinone. Couples the redox reaction to proton translocation (for every two electrons transferred, four hydrogen ions are translocated across the cytoplasmic membrane), and thus conserves the redox energy in a proton gradient. The chain is NADH-quinone oxidoreductase subunit I from Rickettsia felis (strain ATCC VR-1525 / URRWXCal2) (Rickettsia azadi).